A 425-amino-acid polypeptide reads, in one-letter code: Polyribonucleotide 5'-hydroxyl-kinase Clp1 (425 aa).

Residues E22, K62, and 124-129 each bind ATP; that span reads DVGKST.

It belongs to the Clp1 family. Clp1 subfamily. In terms of assembly, component of the tRNA splicing endonuclease complex, composed of CLP1, TSEN2, TSEN15, TSEN34 and TSEN54. Component of pre-mRNA cleavage complex II (CF-II). Also associates with numerous components of the pre-mRNA cleavage complex I (CF-I/CFIm), including NUDT21, CPSF2, CPSF3, CPSF6 and CPSF7. Interacts with CSTF2 and SYMPK. Mg(2+) serves as cofactor. Mn(2+) is required as a cofactor. Requires Ni(2+) as cofactor.

It localises to the nucleus. It catalyses the reaction a 5'-end dephospho-2'-deoxyribonucleoside-DNA + ATP = a 5'-end 5'-phospho-2'-deoxyribonucleoside-DNA + ADP + H(+). The catalysed reaction is a 5'-end dephospho-ribonucleoside-RNA + ATP = a 5'-end 5'-phospho-ribonucleoside-RNA + ADP + H(+). In terms of biological role, polynucleotide kinase that can phosphorylate the 5'-hydroxyl groups of double-stranded RNA (dsRNA), single-stranded RNA (ssRNA), double-stranded DNA (dsDNA) and double-stranded DNA:RNA hybrids. dsRNA is phosphorylated more efficiently than dsDNA, and the RNA component of a DNA:RNA hybrid is phosphorylated more efficiently than the DNA component. Plays a key role in both tRNA splicing and mRNA 3'-end formation. Component of the tRNA splicing endonuclease complex: phosphorylates the 5'-terminus of the tRNA 3'-exon during tRNA splicing; this phosphorylation event is a prerequisite for the subsequent ligation of the two exon halves and the production of a mature tRNA. Its role in tRNA splicing and maturation is required for cerebellar development. Component of the pre-mRNA cleavage complex II (CF-II), which seems to be required for mRNA 3'-end formation. Also phosphorylates the 5'-terminus of exogenously introduced short interfering RNAs (siRNAs), which is a necessary prerequisite for their incorporation into the RNA-induced silencing complex (RISC). However, endogenous siRNAs and microRNAs (miRNAs) that are produced by the cleavage of dsRNA precursors by DICER1 already contain a 5'-phosphate group, so this protein may be dispensible for normal RNA-mediated gene silencing. The polypeptide is Polyribonucleotide 5'-hydroxyl-kinase Clp1 (Bos taurus (Bovine)).